The following is a 66-amino-acid chain: Large ribosomal subunit protein bL33c (66 aa).

Belongs to the bacterial ribosomal protein bL33 family.

The protein resides in the plastid. It is found in the chloroplast. This chain is Large ribosomal subunit protein bL33c, found in Aethionema cordifolium (Lebanon stonecress).